We begin with the raw amino-acid sequence, 1196 residues long: DNA polymerase beta (1196 aa).

It belongs to the DNA polymerase type-B family.

It carries out the reaction DNA(n) + a 2'-deoxyribonucleoside 5'-triphosphate = DNA(n+1) + diphosphate. Its function is as follows. DNA-directed DNA polymerase involved in viral DNA replication. The polypeptide is DNA polymerase beta (African swine fever virus (isolate Pig/Kenya/KEN-50/1950) (ASFV)).